Here is a 39-residue protein sequence, read N- to C-terminus: Cytochrome b559 subunit beta (39 aa).

The chain crosses the membrane as a helical span at residues 14–30 (WLAVHGLAVPTVFFLGS). H18 contacts heme.

This sequence belongs to the PsbE/PsbF family. As to quaternary structure, heterodimer of an alpha subunit and a beta subunit. PSII is composed of 1 copy each of membrane proteins PsbA, PsbB, PsbC, PsbD, PsbE, PsbF, PsbH, PsbI, PsbJ, PsbK, PsbL, PsbM, PsbT, PsbX, PsbY, PsbZ, Psb30/Ycf12, at least 3 peripheral proteins of the oxygen-evolving complex and a large number of cofactors. It forms dimeric complexes. Heme b serves as cofactor.

The protein resides in the plastid membrane. This b-type cytochrome is tightly associated with the reaction center of photosystem II (PSII). PSII is a light-driven water:plastoquinone oxidoreductase that uses light energy to abstract electrons from H(2)O, generating O(2) and a proton gradient subsequently used for ATP formation. It consists of a core antenna complex that captures photons, and an electron transfer chain that converts photonic excitation into a charge separation. The chain is Cytochrome b559 subunit beta from Cuscuta europaea (European dodder).